We begin with the raw amino-acid sequence, 98 residues long: Late cornified envelope-like proline-rich protein 1 (98 aa).

Positions 1 to 26 are disordered; the sequence is MSSDDKSKSNDPKTEPKNCDPKCEQK.

The protein belongs to the cornifin (SPRR) family.

The protein is Late cornified envelope-like proline-rich protein 1 (LELP1) of Homo sapiens (Human).